Consider the following 285-residue polypeptide: Seed agglutinin 2 (285 aa).

Residues 1–31 (MASYKFKTQNSFLLLLSISFFFLLLLNKVNS) form the signal peptide. N-linked (GlcNAc...) asparagine glycosylation is present at Asn-147. Mn(2+)-binding residues include Glu-156 and Asp-158. The Ca(2+) site is built by Asp-158, Asn-162, and Asp-166. Mn(2+)-binding residues include Asp-166 and His-171.

The protein belongs to the leguminous lectin family. As to quaternary structure, homotetramer. Post-translationally, mostly found in non-glycosylated form. In terms of tissue distribution, expressed in seed.

Functionally, seed lectin. The polypeptide is Seed agglutinin 2 (Robinia pseudoacacia (Black locust)).